Consider the following 374-residue polypeptide: Polar flagellin E (374 aa).

Residues 102 to 126 are a coiled coil; that stretch reads SHEQDDRKSLQQEVIALQDELDRVA.

It belongs to the bacterial flagellin family. Heteromer of multiple flagellin subunits including FlaA, FlaB/D, FlaC, FlaE and FlaF.

The protein resides in the secreted. It is found in the bacterial flagellum. Its function is as follows. Flagellin is the subunit protein which polymerizes to form the filaments of bacterial flagella. This chain is Polar flagellin E (flaE), found in Vibrio parahaemolyticus serotype O3:K6 (strain RIMD 2210633).